The sequence spans 124 residues: Flowering-promoting factor 1-like protein 1 (124 aa).

The interval 19–42 (PYNQSAGDSSESSSSGGNQQQRMR) is disordered. Low complexity predominate over residues 22–39 (QSAGDSSESSSSGGNQQQ).

The protein belongs to the FPF1 family. As to expression, expressed in roots, flowers, and at a low level, in leaves.

In terms of biological role, modulates the competence to flowering of apical meristems. The chain is Flowering-promoting factor 1-like protein 1 (FLP1) from Arabidopsis thaliana (Mouse-ear cress).